The sequence spans 283 residues: 4-diphosphocytidyl-2-C-methyl-D-erythritol kinase (283 aa).

Lys-8 is a catalytic residue. 90 to 100 (PIGSGLAGGSS) is a binding site for ATP. Asp-132 is an active-site residue.

The protein belongs to the GHMP kinase family. IspE subfamily.

The enzyme catalyses 4-CDP-2-C-methyl-D-erythritol + ATP = 4-CDP-2-C-methyl-D-erythritol 2-phosphate + ADP + H(+). It functions in the pathway isoprenoid biosynthesis; isopentenyl diphosphate biosynthesis via DXP pathway; isopentenyl diphosphate from 1-deoxy-D-xylulose 5-phosphate: step 3/6. Its function is as follows. Catalyzes the phosphorylation of the position 2 hydroxy group of 4-diphosphocytidyl-2C-methyl-D-erythritol. The protein is 4-diphosphocytidyl-2-C-methyl-D-erythritol kinase of Chlamydia muridarum (strain MoPn / Nigg).